An 826-amino-acid polypeptide reads, in one-letter code: Ubiquitin carboxyl-terminal hydrolase 16 (826 aa).

Positions 1-23 (MGKKRTKGKSVPEKASSESTEPM) are disordered. Residues 22-141 (PMCRHLRKGL…QVVDYVRKQA (120 aa)) form a UBP-type zinc finger. Residues Cys-24, His-26, Cys-48, Cys-51, Cys-73, Cys-76, Cys-81, His-89, His-93, His-102, Cys-115, and Cys-118 each coordinate Zn(2+). Lys-139 is covalently cross-linked (Glycyl lysine isopeptide (Lys-Gly) (interchain with G-Cter in SUMO2)). The interval 145–184 (TSKPAEKNNGHIELENKKLEKESKNEQEREKSESMAKENI) is disordered. The segment covering 148–180 (PAEKNNGHIELENKKLEKESKNEQEREKSESMA) has biased composition (basic and acidic residues). At Ser-188 the chain carries Phosphoserine. Residues 195–825 (KGLSNLGNTC…QAYLLFYERI (631 aa)) enclose the USP domain. Cys-204 (nucleophile) is an active-site residue. Over residues 392-407 (QSGKKNINDKNVKKTM) the composition is skewed to basic and acidic residues. 2 disordered regions span residues 392-456 (QSGK…RRQQ) and 526-553 (ADER…TSAP). A compositionally biased stretch (acidic residues) spans 408 to 419 (EEEDKDSEEEKD). Position 414 is a phosphoserine (Ser-414). A compositionally biased stretch (basic residues) spans 436–456 (HTQKKAKKQAKKQAKNQRRQQ). The span at 526–537 (ADERKCPEHPEV) shows a compositional bias: basic and acidic residues. Residues 539 to 551 (SVSTESDLGSLTS) are compositionally biased toward polar residues. The active-site Proton acceptor is the His-760.

The protein belongs to the peptidase C19 family. USP16 subfamily. Homotetramer. Associates with late pre-40S ribosomes. Interacts with CEP78; promoting deubiquitination of tektins. Phosphorylated at the onset of mitosis and dephosphorylated during the metaphase/anaphase transition. Phosphorylation by AURKB enhances the deubiquitinase activity.

The protein resides in the nucleus. It carries out the reaction Thiol-dependent hydrolysis of ester, thioester, amide, peptide and isopeptide bonds formed by the C-terminal Gly of ubiquitin (a 76-residue protein attached to proteins as an intracellular targeting signal).. Specifically deubiquitinates 'Lys-120' of histone H2A (H2AK119Ub), a specific tag for epigenetic transcriptional repression, thereby acting as a coactivator. Deubiquitination of histone H2A is a prerequisite for subsequent phosphorylation at 'Ser-11' of histone H3 (H3S10ph), and is required for chromosome segregation when cells enter into mitosis. In resting B- and T-lymphocytes, phosphorylation by AURKB leads to enhance its activity, thereby maintaining transcription in resting lymphocytes. Regulates Hox gene expression via histone H2A deubiquitination. Prefers nucleosomal substrates. Does not deubiquitinate histone H2B. Also deubiquitinates non-histone proteins, such as ribosomal protein RPS27A: deubiquitination of monoubiquitinated RPS27A promotes maturation of the 40S ribosomal subunit. Also mediates deubiquitination of tektin proteins (TEKT1, TEKT2, TEK3, TEKT4 and TEKT5), promoting their stability. The protein is Ubiquitin carboxyl-terminal hydrolase 16 (Usp16) of Rattus norvegicus (Rat).